The following is a 336-amino-acid chain: Oxaloacetate decarboxylase (336 aa).

The region spanning 10 to 258 (PIVLDTTVRD…LAAVDLDRIF (249 aa)) is the Pyruvate carboxyltransferase domain. Positions 19, 197, and 199 each coordinate Mn(2+).

This sequence belongs to the 4-hydroxy-2-oxovalerate aldolase family. Homodimer. It depends on a divalent metal cation as a cofactor.

The enzyme catalyses oxaloacetate + H(+) = pyruvate + CO2. Activity is abolished upon incubation with Chelex and EDTA. Functionally, exhibits oxaloacetate decarboxylase activity. Lacks any detectable aldolase activity with 4-hydroxy-2-oxopentanoate (HOPA), 4-hydroxy-2-oxohexanoate (HOHA) or other 4-hydroxy-2-oxoacids. The protein is Oxaloacetate decarboxylase of Mycobacterium tuberculosis (strain ATCC 25618 / H37Rv).